Here is a 688-residue protein sequence, read N- to C-terminus: Elongation factor G (688 aa).

The tr-type G domain maps to Lys-6–Ile-280. GTP contacts are provided by residues Ala-15–Thr-22, Asp-79–His-83, and Asn-133–Asp-136.

This sequence belongs to the TRAFAC class translation factor GTPase superfamily. Classic translation factor GTPase family. EF-G/EF-2 subfamily.

Its subcellular location is the cytoplasm. Functionally, catalyzes the GTP-dependent ribosomal translocation step during translation elongation. During this step, the ribosome changes from the pre-translocational (PRE) to the post-translocational (POST) state as the newly formed A-site-bound peptidyl-tRNA and P-site-bound deacylated tRNA move to the P and E sites, respectively. Catalyzes the coordinated movement of the two tRNA molecules, the mRNA and conformational changes in the ribosome. The protein is Elongation factor G of Ureaplasma parvum serovar 3 (strain ATCC 27815 / 27 / NCTC 11736).